Consider the following 319-residue polypeptide: Acetyl esterase (319 aa).

An Involved in the stabilization of the negatively charged intermediate by the formation of the oxyanion hole motif is present at residues 91 to 93; the sequence is HGG. Residues Ser-165, Asp-262, and His-292 contribute to the active site.

This sequence belongs to the 'GDXG' lipolytic enzyme family. Homodimer. Interacts with MalT and MelA.

It localises to the cytoplasm. In terms of biological role, displays esterase activity towards short chain fatty esters (acyl chain length of up to 8 carbons). Able to hydrolyze triacetylglycerol (triacetin) and tributyrylglycerol (tributyrin), but not trioleylglycerol (triolein) or cholesterol oleate. Negatively regulates MalT activity by antagonizing maltotriose binding. Inhibits MelA galactosidase activity. The protein is Acetyl esterase of Escherichia coli O45:K1 (strain S88 / ExPEC).